Reading from the N-terminus, the 407-residue chain is uncharacterized protein (407 aa).

A disordered region spans residues 145–231 (EANRFGRSNS…DPLTSITSDT (87 aa)). The span at 158–175 (SNSRSKSSRSRSNNRSKS) shows a compositional bias: basic residues. Residues 176–196 (SRSSSTQSKSNNRSNSRSNSK) are compositionally biased toward low complexity. The region spanning 271–407 (IVFETLDQND…NHKIHMEKDI (137 aa)) is the N-acetyltransferase domain.

Its subcellular location is the virion. This is an uncharacterized protein from Acanthamoeba polyphaga (Amoeba).